The following is a 66-amino-acid chain: Large ribosomal subunit protein bL33 (66 aa).

It belongs to the bacterial ribosomal protein bL33 family.

The polypeptide is Large ribosomal subunit protein bL33 (Wolbachia pipientis wMel).